Consider the following 545-residue polypeptide: T-box transcription factor TBX4 (545 aa).

Residues 71 to 251 (LHEKELWKKF…NNPFAKGFRG (181 aa)) constitute a DNA-binding region (T-box). The interval 479 to 509 (QSQVRERGPSASFPRERGLPQGCERKPPSPH) is disordered. Basic and acidic residues predominate over residues 482-505 (VRERGPSASFPRERGLPQGCERKP). At Ser-507 the chain carries Phosphoserine.

The protein resides in the nucleus. In terms of biological role, transcriptional regulator that has an essential role in the organogenesis of lungs, pelvis, and hindlimbs. In Homo sapiens (Human), this protein is T-box transcription factor TBX4 (TBX4).